Reading from the N-terminus, the 597-residue chain is Alpha-1,2-mannosyltransferase MNN2 (597 aa).

The Cytoplasmic segment spans residues 1 to 6 (MIAKQK). A helical transmembrane segment spans residues 7–27 (IKILIGVIIVIATYHFIVSSN). Residues 28–597 (VRSKDLSDLV…ETAEIPTVVS (570 aa)) are Extracellular-facing. A disordered region spans residues 39 to 89 (LGSSDKSTTENERPKNNIVTNNRLDNPPNEDIPHAEPDSPPQEPPKSGNKP). N-linked (GlcNAc...) asparagine glycosylation occurs at Asn-382.

This sequence belongs to the MNN1/MNT family. Mn(2+) is required as a cofactor.

The protein resides in the golgi apparatus membrane. It functions in the pathway protein modification; protein glycosylation. With respect to regulation, enzyme activity is regulated by iron. Its function is as follows. Alpha-1,2-mannosyltransferase required for cell wall integrity. Responsible for addition of the first alpha-1,2-linked mannose to form the branches on the mannan backbone of oligosaccharides. Addition of alpha-1,2-mannose is required for stabilization of the alpha-1,6-mannose backbone and hence regulates mannan fibril length; and is important for both immune recognition and virulence. Promotes iron uptake and usage along the endocytosis pathway under iron-limiting conditions. This chain is Alpha-1,2-mannosyltransferase MNN2 (MNN2), found in Candida albicans (strain SC5314 / ATCC MYA-2876) (Yeast).